The sequence spans 1365 residues: Histone-lysine N-methyltransferase NSD2 (1365 aa).

Residues Thr110 and Thr114 each carry the phosphothreonine modification. Ser121 carries the post-translational modification Phosphoserine. Residues 149-170 (ADVSQSEENGQKPENKARRNRK) form a disordered region. A Phosphoserine modification is found at Ser172. The PWWP 1 domain occupies 222–286 (VGDLVWSKVS…FEKSLVAFEG (65 aa)). Ser376 bears the Phosphoserine mark. Disordered stretches follow at residues 376–455 (SSGV…RKGD) and 516–658 (EDSG…SKKS). Thr422 is modified (phosphothreonine). The segment at residues 453-521 (KGDAASQFLV…VQAEEDSGNV (69 aa)) is a DNA-binding region (HMG box). Phosphothreonine is present on Thr544. A compositionally biased stretch (basic and acidic residues) spans 552-567 (DKHSLRKRDTITDKTA). Residues 580-590 (SLKSQAATKNL) are compositionally biased toward polar residues. The span at 606 to 622 (AASSALGFSKSSSPSAS) shows a compositional bias: low complexity. Ser614 bears the Phosphoserine mark. Residues 632–648 (PGDEPSESPYESADETQ) show a composition bias toward acidic residues. 3 consecutive PHD-type zinc fingers follow at residues 667-713 (EYVC…CASG), 714-770 (IHSC…CHAS), and 831-875 (VSWC…CRAG). The PWWP 2 domain maps to 880–942 (FQDIIWVKLG…QARVFPYMEG (63 aa)). The region spanning 1011 to 1061 (SEIPKCNCKPTDENPCGFDSECLNRMLMFECHPQVCPAGEFCQNQCFTKRQ) is the AWS domain. 7 residues coordinate Zn(2+): Cys1016, Cys1018, Cys1026, Cys1032, Cys1041, Cys1046, and Cys1052. One can recognise an SET domain in the interval 1063–1180 (PETKIIKTDG…AGTELTFNYN (118 aa)). Residues Trp1075, 1115–1118 (THFY), and 1141–1142 (NH) each bind S-adenosyl-L-methionine. Cys1144 serves as a coordination point for Zn(2+). Asn1186 lines the S-adenosyl-L-methionine pocket. In terms of domain architecture, Post-SET spans 1187–1203 (EKTVCRCGASNCSGFLG). Zn(2+) is bound at residue Cys1191. Arg1192 is a binding site for S-adenosyl-L-methionine. Zn(2+) is bound by residues Cys1193 and Cys1198. The tract at residues 1207 to 1232 (KTSTTLSSEEKGKKTKKKTRRRRAKG) is disordered. Over residues 1219 to 1230 (KKTKKKTRRRRA) the composition is skewed to basic residues. A PHD-type 4; atypical zinc finger spans residues 1239 to 1286 (EDECFRCGDGGQLVLCDRKFCTKAYHLSCLGLGKRPFGKWECPWHHCD). The disordered stretch occupies residues 1333–1365 (VRSTKTEKPPPEPGKPKGKRRRRRGWRRVTEGK). Over residues 1348-1359 (PKGKRRRRRGWR) the composition is skewed to basic residues.

This sequence belongs to the class V-like SAM-binding methyltransferase superfamily. Histone-lysine methyltransferase family. SET2 subfamily. As to quaternary structure, interacts with HDAC1. Interacts (via PHD-type zinc fingers 1, 2 and 3) with SALL1. Interacts (via PHD-type 1, 2 and 3) with SALL4. Interacts with NANOG. Interacts with OGT. Interacts (via HMG box) with NKX2-5. As to expression, widely expressed. Predominantly expressed in thymus and testis.

The protein localises to the nucleus. It is found in the chromosome. Its subcellular location is the cytoplasm. It localises to the nucleolus. The enzyme catalyses L-lysyl(36)-[histone H3] + S-adenosyl-L-methionine = N(6)-methyl-L-lysyl(36)-[histone H3] + S-adenosyl-L-homocysteine + H(+). It catalyses the reaction L-lysyl(36)-[histone H3] + 2 S-adenosyl-L-methionine = N(6),N(6)-dimethyl-L-lysyl(36)-[histone H3] + 2 S-adenosyl-L-homocysteine + 2 H(+). Functionally, histone methyltransferase which specifically dimethylates nucleosomal histone H3 at 'Lys-36' (H3K36me2). Also monomethylates nucleosomal histone H3 at 'Lys-36' (H3K36me) in vitro. Does not trimethylate nucleosomal histone H3 at 'Lys-36' (H3K36me3). However, specifically trimethylates histone H3 at 'Lys-36' (H3K36me3) at euchromatic regions in embryonic stem (ES) cells. By methylating histone H3 at 'Lys-36', involved in the regulation of gene transcription during various biological processes. In ES cells, associates with developmental transcription factors such as SALL1 and represses inappropriate gene transcription mediated by histone deacetylation. During heart development, associates with transcription factor NKX2-5 to repress transcription of NKX2-5 target genes. Plays an essential role in adipogenesis, by regulating expression of genes involved in pre-adipocyte differentiation. During T-cell receptor (TCR) and CD28-mediated T-cell activation, promotes the transcription of transcription factor BCL6 which is required for follicular helper T (Tfh) cell differentiation. During B-cell development, required for the generation of the B1 lineage. During B2 cell activation, may contribute to the control of isotype class switch recombination (CRS), splenic germinal center formation, and the humoral immune response. Plays a role in class switch recombination of the immunoglobulin heavy chain (IgH) locus during B-cell activation. By regulating the methylation of histone H3 at 'Lys-36' and histone H4 at 'Lys-20' at the IgH locus, involved in TP53BP1 recruitment to the IgH switch region and promotes the transcription of IgA. Its function is as follows. Histone methyltransferase which specifically dimethylates nucleosomal histone H3 at 'Lys-36' (H3K36me2). Histone methyltransferase which specifically dimethylates nucleosomal histone H3 at 'Lys-36' (H3K36me2). Methylation of histone H3 at 'Lys-27' is controversial. Mono-, di- or tri-methylates histone H3 at 'Lys-27' (H3K27me, H3K27me2 and H3K27me3). Does not methylate histone H3 at 'Lys-27'. May act as a transcription regulator that binds DNA and suppresses IL5 transcription through HDAC recruitment. The protein is Histone-lysine N-methyltransferase NSD2 of Homo sapiens (Human).